Consider the following 384-residue polypeptide: Outer membrane protein assembly factor BamC (384 aa).

Positions 1–23 (MNKLNSVVVARGAVAVLLIGLAG) are cleaved as a signal peptide. Cysteine 24 is lipidated: N-palmitoyl cysteine. The S-diacylglycerol cysteine moiety is linked to residue cysteine 24. Disordered stretches follow at residues 47 to 70 (LEVP…TSGK) and 251 to 273 (QAAQ…SGTL).

Belongs to the BamC family. As to quaternary structure, part of the Bam complex.

It is found in the cell outer membrane. Functionally, part of the outer membrane protein assembly complex, which is involved in assembly and insertion of beta-barrel proteins into the outer membrane. This is Outer membrane protein assembly factor BamC from Accumulibacter regalis.